The primary structure comprises 273 residues: Vacuolar iron transporter (273 aa).

Topologically, residues 1–47 (MVSKKTIEARKAYYNEDVVLSKEAHDFYHNLDKHGENHNLDKDNLKT) are cytoplasmic. A helical membrane pass occupies residues 48–68 (IIFGSLDGIITIFAIVSGCVG). Topologically, residues 69–75 (AKITPTQ) are vacuolar. The helical transmembrane segment at 76-96 (VIIIGIGNLFANAISMGFSEY) threads the bilayer. The Cytoplasmic segment spans residues 97-181 (TSSTAQRDFM…NEDKNECLKK (85 aa)). Residues glutamate 113, glutamate 116, glutamate 124, glutamate 127, methionine 161, and glutamate 165 each contribute to the Fe cation site. A helical transmembrane segment spans residues 182 to 202 (GIIMFLSFAVFGIIPLSAYVA). The Vacuolar segment spans residues 203-212 (YTVFFGYTDY). Residues 213–233 (TTSFLVVFISTLTTLFILGLF) traverse the membrane as a helical segment. Over 234 to 246 (KSQFTNQKPITCA) the chain is Cytoplasmic. The chain crosses the membrane as a helical span at residues 247–267 (LYMVLNGMIAGMVPFLLGVVL). Over 268–273 (KNNISE) the chain is Vacuolar.

It belongs to the CCC1 family. As to quaternary structure, monomer.

It localises to the vacuole membrane. The protein localises to the endoplasmic reticulum membrane. The protein resides in the cytoplasmic vesicle membrane. The catalysed reaction is Fe(2+)(in) = Fe(2+)(out). Its function is as follows. Vacuolar iron transporter involved in the transfer of iron ions from the cytosol to the vacuole for intracellular iron storage. Involved in detoxification of excess iron. The transport mechanism is not well defined and the role of protons is not clear. The chain is Vacuolar iron transporter from Plasmodium falciparum (isolate 3D7).